We begin with the raw amino-acid sequence, 277 residues long: GPALPP motifs-containing protein 1 (277 aa).

Positions 1–240 (MARDLIGPAL…VWTDTPADRE (240 aa)) are disordered. At Ala2 the chain carries N-acetylalanine. A GPALPP motif 1 motif is present at residues 7 to 12 (GPALPP). The residue at position 28 (Ser28) is a Phosphoserine. The GPALPP motif 2 signature appears at 32 to 37 (GPALPP). 2 stretches are compositionally biased toward acidic residues: residues 60–69 (GNQESEEDDT) and 81–90 (DDDDDDDDEG). Positions 93–98 (GPALPP) match the GPALPP motif 3 motif. Phosphoserine is present on Ser106. Over residues 108–117 (PRPMIGPALP) the composition is skewed to pro residues. The short motif at 113–118 (GPALPP) is the GPALPP motif 4 element. 2 positions are modified to phosphoserine: Ser138 and Ser143. At Thr147 the chain carries Phosphothreonine. 2 positions are modified to phosphoserine: Ser149 and Ser150. Over residues 172-196 (EFEKRAQRMKEKLTKGDDDSSKPIT) the composition is skewed to basic and acidic residues.

The protein is GPALPP motifs-containing protein 1 (GPALPP1) of Bos taurus (Bovine).